The primary structure comprises 468 residues: Cysteine--tRNA ligase (468 aa).

Residue cysteine 33 coordinates Zn(2+). The short motif at 35–45 (ATVQGLPHIGH) is the 'HIGH' region element. Zn(2+) contacts are provided by cysteine 211, histidine 236, and glutamate 240. The 'KMSKS' region signature appears at 267–271 (KMSKS). Lysine 270 provides a ligand contact to ATP.

It belongs to the class-I aminoacyl-tRNA synthetase family. Monomer. Zn(2+) is required as a cofactor.

The protein localises to the cytoplasm. It catalyses the reaction tRNA(Cys) + L-cysteine + ATP = L-cysteinyl-tRNA(Cys) + AMP + diphosphate. The sequence is that of Cysteine--tRNA ligase from Mycobacterium avium (strain 104).